Here is a 317-residue protein sequence, read N- to C-terminus: uncharacterized protein (317 aa).

Helical transmembrane passes span 24-44, 63-83, 136-156, 187-207, 229-249, 252-272, and 295-315; these read ISII…TGIM, LSIS…SILA, LGVA…ISED, LIPI…IGFF, ILAL…GGFL, GILS…LTFS, and IVMV…AGLL.

It to M.jannaschii MJ0880, MJ1556 and MJ1589.

It localises to the cell membrane. This is an uncharacterized protein from Methanocaldococcus jannaschii (strain ATCC 43067 / DSM 2661 / JAL-1 / JCM 10045 / NBRC 100440) (Methanococcus jannaschii).